The primary structure comprises 414 residues: Serine hydroxymethyltransferase (414 aa).

(6S)-5,6,7,8-tetrahydrofolate-binding positions include Leu121 and 125-127 (GHL). N6-(pyridoxal phosphate)lysine is present on Lys230.

It belongs to the SHMT family. Homodimer. Pyridoxal 5'-phosphate is required as a cofactor.

The protein localises to the cytoplasm. The catalysed reaction is (6R)-5,10-methylene-5,6,7,8-tetrahydrofolate + glycine + H2O = (6S)-5,6,7,8-tetrahydrofolate + L-serine. The protein operates within one-carbon metabolism; tetrahydrofolate interconversion. It functions in the pathway amino-acid biosynthesis; glycine biosynthesis; glycine from L-serine: step 1/1. Its function is as follows. Catalyzes the reversible interconversion of serine and glycine with tetrahydrofolate (THF) serving as the one-carbon carrier. This reaction serves as the major source of one-carbon groups required for the biosynthesis of purines, thymidylate, methionine, and other important biomolecules. Also exhibits THF-independent aldolase activity toward beta-hydroxyamino acids, producing glycine and aldehydes, via a retro-aldol mechanism. This chain is Serine hydroxymethyltransferase, found in Acidithiobacillus ferrooxidans (strain ATCC 23270 / DSM 14882 / CIP 104768 / NCIMB 8455) (Ferrobacillus ferrooxidans (strain ATCC 23270)).